The following is a 592-amino-acid chain: Arginine--tRNA ligase (592 aa).

The 'HIGH' region signature appears at 139–149 (ANPNGPLHIGH).

This sequence belongs to the class-I aminoacyl-tRNA synthetase family.

Its subcellular location is the cytoplasm. The enzyme catalyses tRNA(Arg) + L-arginine + ATP = L-arginyl-tRNA(Arg) + AMP + diphosphate. The sequence is that of Arginine--tRNA ligase from Methanopyrus kandleri (strain AV19 / DSM 6324 / JCM 9639 / NBRC 100938).